A 358-amino-acid polypeptide reads, in one-letter code: uncharacterized protein (358 aa).

This is an uncharacterized protein from Klebsiella pneumoniae.